The primary structure comprises 179 residues: Fas apoptotic inhibitory molecule 1 (179 aa).

The residue at position 2 (Thr-2) is an N-acetylthreonine.

The protein belongs to the FAIM1 family.

It localises to the cytoplasm. In terms of biological role, plays a role as an inducible effector molecule that mediates Fas resistance produced by surface Ig engagement in B cells. This Homo sapiens (Human) protein is Fas apoptotic inhibitory molecule 1 (FAIM).